A 303-amino-acid chain; its full sequence is Target of rapamycin complex subunit LST8 (303 aa).

7 WD repeats span residues 1-27 (MSVILVSAGYDHTIRFWEALTGVCSRT), 30-68 (HSDSQVNRLEITNDKKLLATAGHQNVRLYDIRTTNPNPV), 73-112 (GHRGNVTSVSFQQDNRWMVTSSEDGTIKVWDVRSPSIPRN), 114-153 (KHNAPVNEVVIHPNQGELISCDRDGNIRIWDLGENQCTHQ), 157-196 (EDDTSLQSLSMASDGSMLAAANTKGNCYVWEMPNHTDASH), 205-244 (AHSTYITRILLSSDVKHLATCSADHTARVWSIDDDFKLET), and 248-287 (GHQRWVWDCAFSADSAYLVTASSDHYVRLWDLSTREIVRQ).

It belongs to the WD repeat LST8 family. As to quaternary structure, the target of rapamycin complex 1 (TORC1) is composed of at least KOG1, LST8, TCO89 and either TOR1 (TORC1-A) or TOR2 (TORC1-B). TORC1 binds to and is inhibited by FKBP-rapamycin. Interacts with PIB2; following activation of PIB2 by glutamine or cysteine and as part of the TORC1 complex. The target of rapamycin complex 2 (TORC2) is composed of at least AVO1, AVO2, BIT61, LST8, TOR2 and TSC11. TORC2 forms a homodimer. Contrary to TORC1, TORC2 does not bind to and is not sensitive to FKBP-rapamycin. LST8 binds to the C-terminal kinase domain in TOR2.

The protein localises to the cell membrane. It localises to the vacuole membrane. In terms of biological role, essential component of both TORC1 and TORC2. TORC1 regulates multiple cellular processes to control cell growth in response to environmental signals. Nutrient limitation and environmental stress signals cause inactivation of TORC1. Active TORC1 positively controls ribosome biogenesis via control of rRNA, ribosomal protein and tRNA gene expression, and rRNA processing. TORC1 positively controls protein biosynthesis by regulation of mRNA stability, translation initiation factor activity, and high-affinity amino acid permeases that serve to provide amino acids for use by the translation machinery. TORC1 also promotes growth by sequestering a number of nutrient and general stress-responsive transcription factors in the cytoplasm. TORC1 negatively controls macroautophagy, a process to recycle surplus cytoplasmic mass under nutrient starvation conditions. LST8 is involved in the negative regulation of transcription factors GLN3 and RTG1-RTG3, limiting the synthesis of alpha-ketoglutarate, glutamate and glutamine. LST8 is required for targeting of amino acid permeases (AAPs) to the plasma membrane. TORC2 regulates cell cycle-dependent polarization of the actin-cytoskeleton, cell wall integrity, and receptor endocytosis. TORC2 controls polarity of the actin cytoskeleton, which is required for orienting the secretory pathway toward discrete growth sites, via the RHO1/PKC1/MAPK cell integrity pathway. LST8 is involved in maintenance of cell wall integrity. LST8 modulates TOR2 kinase activity. The polypeptide is Target of rapamycin complex subunit LST8 (Saccharomyces cerevisiae (strain ATCC 204508 / S288c) (Baker's yeast)).